A 438-amino-acid chain; its full sequence is 3-phosphoshikimate 1-carboxyvinyltransferase (438 aa).

3 residues coordinate 3-phosphoshikimate: K28, S29, and R33. Residue K28 coordinates phosphoenolpyruvate. Phosphoenolpyruvate contacts are provided by G97 and R125. Residues S168, S169, Q170, E316, and H343 each contribute to the 3-phosphoshikimate site. Q170 provides a ligand contact to phosphoenolpyruvate. The active-site Proton acceptor is the E316. R347, R388, and K413 together coordinate phosphoenolpyruvate.

It belongs to the EPSP synthase family. Monomer.

It localises to the cytoplasm. The enzyme catalyses 3-phosphoshikimate + phosphoenolpyruvate = 5-O-(1-carboxyvinyl)-3-phosphoshikimate + phosphate. The protein operates within metabolic intermediate biosynthesis; chorismate biosynthesis; chorismate from D-erythrose 4-phosphate and phosphoenolpyruvate: step 6/7. Catalyzes the transfer of the enolpyruvyl moiety of phosphoenolpyruvate (PEP) to the 5-hydroxyl of shikimate-3-phosphate (S3P) to produce enolpyruvyl shikimate-3-phosphate and inorganic phosphate. In Rhodococcus jostii (strain RHA1), this protein is 3-phosphoshikimate 1-carboxyvinyltransferase.